The following is an 84-amino-acid chain: RNA-binding protein Hfq (84 aa).

The Sm domain occupies 11–71 (DVFLNFIRKN…ISTVMPSTPI (61 aa)).

The protein belongs to the Hfq family. Homohexamer.

In terms of biological role, RNA chaperone that binds small regulatory RNA (sRNAs) and mRNAs to facilitate mRNA translational regulation in response to envelope stress, environmental stress and changes in metabolite concentrations. Also binds with high specificity to tRNAs. In Paramagnetospirillum magneticum (strain ATCC 700264 / AMB-1) (Magnetospirillum magneticum), this protein is RNA-binding protein Hfq.